Consider the following 271-residue polypeptide: Plasmanylethanolamine desaturase 1 (271 aa).

The next 3 helical transmembrane spans lie at 48 to 68 (WCCV…LLLL), 75 to 95 (PLVM…SGLV), and 162 to 182 (VLEQ…FGTF). The Histidine box-1 motif lies at 187 to 191 (HKWSH). The Histidine box-2 signature appears at 214 to 218 (HHRIH).

The protein belongs to the fatty acid desaturase CarF family.

It is found in the endoplasmic reticulum membrane. The catalysed reaction is a 1-(1,2-saturated alkyl)-2-acyl-sn-glycero-3-phosphoethanolamine + 2 Fe(II)-[cytochrome b5] + O2 + 2 H(+) = a 1-O-(1Z-alkenyl)-2-acyl-sn-glycero-3-phosphoethanolamine + 2 Fe(III)-[cytochrome b5] + 2 H2O. The enzyme catalyses a 1-O-hexadecyl-2-acyl-sn-glycero-3-phosphoethanolamine + 2 Fe(II)-[cytochrome b5] + O2 + 2 H(+) = a 1-O-(1Z-hexadecenyl)-2-acyl-sn-glycero-3-phosphoethanolamine + 2 Fe(III)-[cytochrome b5] + 2 H2O. It catalyses the reaction a 1-O-octadecyl-2-acyl-sn-glycero-3-phosphoethanolamine + 2 Fe(II)-[cytochrome b5] + O2 + 2 H(+) = a 1-O-(1Z-octadecenyl)-2-acyl-sn-glycero-3-phosphoethanolamine + 2 Fe(III)-[cytochrome b5] + 2 H2O. It carries out the reaction a 1-O-(9Z-octadecenyl)-2-acyl-sn-glycero-3-phosphoethanolamine + 2 Fe(II)-[cytochrome b5] + O2 + 2 H(+) = a 1-O-(1Z,9Z-octadecadienyl)-2-acyl-sn-glycero-3-phosphoethanolamine + 2 Fe(III)-[cytochrome b5] + 2 H2O. It participates in lipid metabolism; fatty acid metabolism. Its function is as follows. Plasmanylethanolamine desaturase involved in plasmalogen biogenesis in the endoplasmic reticulum membrane. Plasmalogens are glycerophospholipids with a hydrocarbon chain linked by a vinyl ether bond at the glycerol sn-1 position, and are involved in antioxidative and signaling mechanisms. The chain is Plasmanylethanolamine desaturase 1 from Bos taurus (Bovine).